The sequence spans 318 residues: NADH-quinone oxidoreductase subunit H 2 (318 aa).

Helical transmembrane passes span 4-24 (LLIALFSLILLLALLGAAGVF), 77-97 (LAPALAAFPMLAGFGVVAFAP), 106-126 (VGVLFVMGMLALTVWALVLGA), 146-166 (LAYESFLGLSLMGCVLLAGSF), 179-199 (LWFILLQPLGAALFFLAGLAA), 214-234 (LVAGFMTEYSGMSFALFFLGE), 238-258 (ILLVAALFTTLFLGGWAGPIL), 262-282 (VWFGLKVAAISVVFVWLRAAL), and 293-313 (FAWKVALPLALLNLLVTAWIA).

It belongs to the complex I subunit 1 family. In terms of assembly, NDH-1 is composed of 14 different subunits. Subunits NuoA, H, J, K, L, M, N constitute the membrane sector of the complex.

The protein resides in the cell inner membrane. The enzyme catalyses a quinone + NADH + 5 H(+)(in) = a quinol + NAD(+) + 4 H(+)(out). Functionally, NDH-1 shuttles electrons from NADH, via FMN and iron-sulfur (Fe-S) centers, to quinones in the respiratory chain. The immediate electron acceptor for the enzyme in this species is believed to be ubiquinone. Couples the redox reaction to proton translocation (for every two electrons transferred, four hydrogen ions are translocated across the cytoplasmic membrane), and thus conserves the redox energy in a proton gradient. This subunit may bind ubiquinone. The polypeptide is NADH-quinone oxidoreductase subunit H 2 (Cereibacter sphaeroides (strain ATCC 17029 / ATH 2.4.9) (Rhodobacter sphaeroides)).